Reading from the N-terminus, the 64-residue chain is Ferredoxin-like protein in nif region (64 aa).

Positions A2 to E30 constitute a 4Fe-4S ferredoxin-type domain. The [4Fe-4S] cluster site is built by C10, C13, C16, C20, C39, C42, C51, and C55.

[4Fe-4S] cluster serves as cofactor.

The protein is Ferredoxin-like protein in nif region (fdxN) of Sinorhizobium fredii (strain NBRC 101917 / NGR234).